The chain runs to 342 residues: DNA-directed RNA polymerase subunit alpha (342 aa).

The segment at 1 to 239 (MTTFLAKNWS…DQLQVFINFQ (239 aa)) is alpha N-terminal domain (alpha-NTD). Residues 254 to 342 (INPVLLKKVY…SLAKKHEDQY (89 aa)) form an alpha C-terminal domain (alpha-CTD) region.

This sequence belongs to the RNA polymerase alpha chain family. Homodimer. The RNAP catalytic core consists of 2 alpha, 1 beta, 1 beta' and 1 omega subunit. When a sigma factor is associated with the core the holoenzyme is formed, which can initiate transcription.

It catalyses the reaction RNA(n) + a ribonucleoside 5'-triphosphate = RNA(n+1) + diphosphate. In terms of biological role, DNA-dependent RNA polymerase catalyzes the transcription of DNA into RNA using the four ribonucleoside triphosphates as substrates. The polypeptide is DNA-directed RNA polymerase subunit alpha (Orientia tsutsugamushi (strain Ikeda) (Rickettsia tsutsugamushi)).